Consider the following 439-residue polypeptide: Ornithine aminotransferase, mitochondrial (439 aa).

A mitochondrion-targeting transit peptide spans 1–35 (MLSKLASLQTVAALRRGLRTSVASATSVATKKTEQ). An N6-acetyllysine mark is found at lysine 49 and lysine 66. The residue at position 102 (lysine 102) is an N6-succinyllysine. The residue at position 107 (lysine 107) is an N6-acetyllysine; alternate. N6-succinyllysine; alternate is present on lysine 107. Residue lysine 292 is modified to N6-(pyridoxal phosphate)lysine. Lysine 362 carries the post-translational modification N6-acetyllysine; alternate. N6-succinyllysine; alternate is present on lysine 362. 2 positions are modified to N6-acetyllysine: lysine 386 and lysine 392. At lysine 405 the chain carries N6-acetyllysine; alternate. An N6-succinyllysine; alternate modification is found at lysine 405. Lysine 421 is subject to N6-acetyllysine.

In terms of assembly, homohexamer. Requires pyridoxal 5'-phosphate as cofactor. In terms of tissue distribution, expressed in the head and flagellum of epididymal sperm but not in testicular sperm (at protein level).

Its subcellular location is the mitochondrion matrix. It catalyses the reaction L-ornithine + 2-oxoglutarate = L-glutamate 5-semialdehyde + L-glutamate. The protein operates within amino-acid biosynthesis; L-proline biosynthesis; L-glutamate 5-semialdehyde from L-ornithine: step 1/1. Its function is as follows. Catalyzes the reversible interconversion of L-ornithine and 2-oxoglutarate to L-glutamate semialdehyde and L-glutamate. This Rattus norvegicus (Rat) protein is Ornithine aminotransferase, mitochondrial (Oat).